The following is a 358-amino-acid chain: DNA polymerase IV (358 aa).

The UmuC domain maps to 4–185 (IIHVDMDCFY…LPLIKIPGVG (182 aa)). Mg(2+) contacts are provided by D8 and D103. Residue E104 is part of the active site.

Belongs to the DNA polymerase type-Y family. Monomer. The cofactor is Mg(2+).

Its subcellular location is the cytoplasm. The catalysed reaction is DNA(n) + a 2'-deoxyribonucleoside 5'-triphosphate = DNA(n+1) + diphosphate. Its function is as follows. Poorly processive, error-prone DNA polymerase involved in untargeted mutagenesis. Copies undamaged DNA at stalled replication forks, which arise in vivo from mismatched or misaligned primer ends. These misaligned primers can be extended by PolIV. Exhibits no 3'-5' exonuclease (proofreading) activity. May be involved in translesional synthesis, in conjunction with the beta clamp from PolIII. The chain is DNA polymerase IV from Shewanella pealeana (strain ATCC 700345 / ANG-SQ1).